We begin with the raw amino-acid sequence, 537 residues long: Caspase recruitment domain-containing protein 8 (537 aa).

Positions 1-23 (MEKKECPEKSSSSEEELPRRDSG) are enriched in basic and acidic residues. Disordered regions lie at residues 1–28 (MEKKECPEKSSSSEEELPRRDSGSSRNI) and 113–133 (GDIPSVSEEQESSEGQDSGDI). A ZU5 region spans residues 161 to 296 (FLGPEGNVDV…FYAVLESPSF (136 aa)). The FIIND domain maps to 161–446 (FLGPEGNVDV…LQLVAASAPP (286 aa)). The segment at 297 to 446 (SLMGILLRIA…LQLVAASAPP (150 aa)) is UPA. The CARD domain maps to 446–536 (PPFSGAAFVK…YLVSYLRQQN (91 aa)).

Interacts with DPP9; leading to inhibit activation of the inflammasome. DPP9 acts via formation of a ternary complex, composed of a DPP9 homodimer, one full-length CARD8 protein, and one cleaved C-terminus of CARD8 (Caspase recruitment domain-containing protein 8, C-terminus). Interacts with DPP8; leading to inhibit activation of the inflammasome, probably via formation of a ternary complex with DPP8. Interacts with NLRP3. Interacts with IKBKG/NEMO. Interacts with DRAL. Binds to caspase-1 (CASP1), CARD16/pseudo-ICE and CARD18/ICEBERG. Interacts with NLRP2 (via NACHT domain). In terms of assembly, interacts with the C-terminal part of CARD8 (Caspase recruitment domain-containing protein 8, C-terminus) in absence of pathogens and other damage-associated signals. As to quaternary structure, interacts with the N-terminal part of CARD8 (Caspase recruitment domain-containing protein 8, N-terminus) in absence of pathogens and other damage-associated signals. Homomultimer; forms the CARD8 inflammasome polymeric complex, a filament composed of homopolymers of this form in response to pathogens and other damage-associated signals. The CARD8 inflammasome polymeric complex directly recruits pro-caspase-1 (proCASP1) independently of PYCARD/ASC. Interacts (via CARD domain) with CASP1 (via CARD domain); leading to CASP1 activation. In terms of processing, undergoes autocatalytic processing within the FIIND domain to generate the N-terminal and C-terminal parts, which are associated non-covalently in absence of pathogens and other damage-associated signals. Ubiquitinated by the N-end rule pathway in response to pathogens and other damage-associated signals, leading to its degradation by the proteasome and subsequent release of the cleaved C-terminal part of the protein (Caspase recruitment domain-containing protein 8, C-terminus), which polymerizes and forms the CARD8 inflammasome. Post-translationally, (Microbial infection) Proteolytic cleavage by HIV-1 protease in the disordered region and within the ZU5 region of the FIIND domain promotes ubiquitination of the N-terminal part by the N-end rule pathway and degradation by the proteasome, releasing the cleaved C-terminal part of the protein (Caspase recruitment domain-containing protein 8, C-terminus), which polymerizes and forms the CARD8 inflammasome. In terms of processing, undergoes less autocatalytic processing within the FIIND domain compared to isoform 5. As to expression, high expression in lung, ovary, testis and placenta. Lower expression in heart, kidney and liver. Also expressed in spleen, lymph node and bone marrow.

The protein resides in the cytoplasm. It localises to the nucleus. The protein localises to the inflammasome. CARD8 inflammasome is activated by HIV-1 protease activity: HIV-1 protease cleaves CARD8, promoting ubiquitination and degradation of the N-terminal part, releasing the cleaved C-terminal part of the protein (Caspase recruitment domain-containing protein 8, C-terminus), which polymerizes and forms the CARD8 inflammasome. CARD8 inflammasome is inhibited by DPP8 and DPP9, which sequester the C-terminal fragment of CARD8 (Caspase recruitment domain-containing protein 8, C-terminus) in a ternary complex, thereby preventing CARD8 oligomerization and activation. CARD8 inflammasome is activated by Val-boroPro (Talabostat, PT-100), an inhibitor of dipeptidyl peptidases DPP8 and DPP9. Val-boroPro relieves inhibition of DPP8 and/or DPP9 by inducing the proteasome-mediated destruction of the N-terminal part of CARD8, releasing its C-terminal part from autoinhibition. Indirectly activated by the pseudodipeptide CQ31. CQ31 directly inactivates the peptidases PEPD and XPNPEP1, leading to an accumulation of dipeptides that weaky inhibit DDP8 and DPP9, relieving DPP8- and/or DPP9-mediated inhibition of CARD8. Functionally, inflammasome sensor, which mediates inflammasome activation in response to various pathogen-associated signals, leading to subsequent pyroptosis of CD4(+) T-cells and macrophages. Inflammasomes are supramolecular complexes that assemble in the cytosol in response to pathogens and other damage-associated signals and play critical roles in innate immunity and inflammation. Acts as a recognition receptor (PRR): recognizes specific pathogens and other damage-associated signals, such as HIV-1 protease activity or Val-boroPro inhibitor, and mediates CARD8 inflammasome activation. In response to pathogen-associated signals, the N-terminal part of CARD8 is degraded by the proteasome, releasing the cleaved C-terminal part of the protein (Caspase recruitment domain-containing protein 8, C-terminus), which polymerizes to initiate the formation of the inflammasome complex: the CARD8 inflammasome directly recruits pro-caspase-1 (proCASP1) independently of PYCARD/ASC and promotes caspase-1 (CASP1) activation, which subsequently cleaves and activates inflammatory cytokines IL1B and IL18 and gasdermin-D (GSDMD), leading to pyroptosis. Ability to sense HIV-1 protease activity leads to the clearance of latent HIV-1 in patient CD4(+) T-cells after viral reactivation; in contrast, HIV-1 can evade CARD8-sensing when its protease remains inactive in infected cells prior to viral budding. Also acts as a negative regulator of the NLRP3 inflammasome. May also act as an inhibitor of NF-kappa-B activation. In terms of biological role, constitutes the precursor of the CARD8 inflammasome, which mediates autoproteolytic processing within the FIIND domain to generate the N-terminal and C-terminal parts, which are associated non-covalently in absence of pathogens and other damage-associated signals. Regulatory part that prevents formation of the CARD8 inflammasome: in absence of pathogens and other damage-associated signals, interacts with the C-terminal part of CARD8 (Caspase recruitment domain-containing protein 8, C-terminus), preventing activation of the CARD8 inflammasome. In response to pathogen-associated signals, this part is ubiquitinated by the N-end rule pathway and degraded by the proteasome, releasing the cleaved C-terminal part of the protein, which polymerizes and forms the CARD8 inflammasome. Its function is as follows. Constitutes the active part of the CARD8 inflammasome. In absence of pathogens and other damage-associated signals, interacts with the N-terminal part of CARD8 (Caspase recruitment domain-containing protein 8, N-terminus), preventing activation of the CARD8 inflammasome. In response to pathogen-associated signals, the N-terminal part of CARD8 is degraded by the proteasome, releasing this form, which polymerizes to form the CARD8 inflammasome complex: the CARD8 inflammasome complex then directly recruits pro-caspase-1 (proCASP1) and promotes caspase-1 (CASP1) activation, leading to gasdermin-D (GSDMD) cleavage and subsequent pyroptosis. The chain is Caspase recruitment domain-containing protein 8 from Homo sapiens (Human).